Consider the following 422-residue polypeptide: 4-hydroxy-3-methylbut-2-en-1-yl diphosphate synthase (flavodoxin) (422 aa).

Residues Cys-316, Cys-319, Cys-362, and Glu-369 each coordinate [4Fe-4S] cluster.

The protein belongs to the IspG family. It depends on [4Fe-4S] cluster as a cofactor.

It catalyses the reaction (2E)-4-hydroxy-3-methylbut-2-enyl diphosphate + oxidized [flavodoxin] + H2O + 2 H(+) = 2-C-methyl-D-erythritol 2,4-cyclic diphosphate + reduced [flavodoxin]. It participates in isoprenoid biosynthesis; isopentenyl diphosphate biosynthesis via DXP pathway; isopentenyl diphosphate from 1-deoxy-D-xylulose 5-phosphate: step 5/6. Its function is as follows. Converts 2C-methyl-D-erythritol 2,4-cyclodiphosphate (ME-2,4cPP) into 1-hydroxy-2-methyl-2-(E)-butenyl 4-diphosphate. This chain is 4-hydroxy-3-methylbut-2-en-1-yl diphosphate synthase (flavodoxin), found in Ehrlichia canis (strain Jake).